Here is a 699-residue protein sequence, read N- to C-terminus: Long-chain-fatty-acid--CoA ligase 1 (699 aa).

The residue at position 1 (M1) is an N-acetylmethionine. Position 9 is a 3'-nitrotyrosine (Y9). A helical; Signal-anchor for type III membrane protein transmembrane segment spans residues 25 to 45 (LPTNTLMGFGAFAALTTFWYA). Residues 46–699 (TRPKALKPPC…IDELYSTIKI (654 aa)) are Cytoplasmic-facing. Residue Y85 is modified to Phosphotyrosine. Y86 bears the 3'-nitrotyrosine mark. O-linked (GlcNAc) serine glycosylation is present at S136. N6-acetyllysine occurs at positions 208, 357, and 387. S621 carries the phosphoserine modification. An N6-acetyllysine modification is found at K633.

The protein belongs to the ATP-dependent AMP-binding enzyme family. The cofactor is Mg(2+). As to expression, liver, heart, epididymal adipose and to a lesser extent brain, small intestine and lung.

The protein localises to the mitochondrion outer membrane. It is found in the peroxisome membrane. The protein resides in the microsome membrane. It localises to the endoplasmic reticulum membrane. The catalysed reaction is a long-chain fatty acid + ATP + CoA = a long-chain fatty acyl-CoA + AMP + diphosphate. The enzyme catalyses (5Z,8Z,11Z,14Z)-eicosatetraenoate + ATP + CoA = (5Z,8Z,11Z,14Z)-eicosatetraenoyl-CoA + AMP + diphosphate. It catalyses the reaction 3,7,11,15-tetramethylhexadecanoate + ATP + CoA = phytanoyl-CoA + AMP + diphosphate. It carries out the reaction hexadecanoate + ATP + CoA = hexadecanoyl-CoA + AMP + diphosphate. The catalysed reaction is (E)-hexadec-2-enoate + ATP + CoA = (2E)-hexadecenoyl-CoA + AMP + diphosphate. The enzyme catalyses 2,6,10,14-tetramethylpentadecanoate + ATP + CoA = pristanoyl-CoA + AMP + diphosphate. It catalyses the reaction 14,15-epoxy-(5Z,8Z,11Z)-eicosatrienoate + ATP + CoA = 14,15-epoxy-(5Z,8Z,11Z)-eicosatrienoyl-CoA + AMP + diphosphate. It carries out the reaction 5-hydroxy-(6E,8Z,11Z,14Z)-eicosatetraenoate + ATP + CoA = 5-hydroxy-(6E,8Z,11Z,14Z)-eicosatetraenoyl-CoA + AMP + diphosphate. The catalysed reaction is 12-hydroxy-(5Z,8Z,10E,14Z)-eicosatetraenoate + ATP + CoA = 12-hydroxy-(5Z,8Z,10E,14Z)-eicosatetraenoyl-CoA + AMP + diphosphate. The enzyme catalyses 15-hydroxy-(5Z,8Z,11Z,13E)-eicosatetraenoate + ATP + CoA = 15-hydroxy-(5Z,8Z,11Z,13E)-eicosatetraenoyl-CoA + AMP + diphosphate. It catalyses the reaction (9Z)-octadecenoate + ATP + CoA = (9Z)-octadecenoyl-CoA + AMP + diphosphate. Inhibited at high temperature and by arachidonate. Functionally, catalyzes the conversion of long-chain fatty acids to their active form acyl-CoAs for both synthesis of cellular lipids, and degradation via beta-oxidation. Preferentially uses palmitoleate, oleate and linoleate. Preferentially activates arachidonate than epoxyeicosatrienoic acids (EETs) or hydroxyeicosatrienoic acids (HETEs). This chain is Long-chain-fatty-acid--CoA ligase 1, found in Rattus norvegicus (Rat).